The primary structure comprises 204 residues: ATP-dependent Clp protease proteolytic subunit (204 aa).

Serine 101 serves as the catalytic Nucleophile. Histidine 126 is a catalytic residue.

It belongs to the peptidase S14 family. In terms of assembly, component of the chloroplastic Clp protease core complex.

It is found in the plastid. Its subcellular location is the chloroplast stroma. The catalysed reaction is Hydrolysis of proteins to small peptides in the presence of ATP and magnesium. alpha-casein is the usual test substrate. In the absence of ATP, only oligopeptides shorter than five residues are hydrolyzed (such as succinyl-Leu-Tyr-|-NHMec, and Leu-Tyr-Leu-|-Tyr-Trp, in which cleavage of the -Tyr-|-Leu- and -Tyr-|-Trp bonds also occurs).. Cleaves peptides in various proteins in a process that requires ATP hydrolysis. Has a chymotrypsin-like activity. Plays a major role in the degradation of misfolded proteins. In Phalaenopsis aphrodite subsp. formosana (Moth orchid), this protein is ATP-dependent Clp protease proteolytic subunit.